We begin with the raw amino-acid sequence, 331 residues long: Sideroflexin-5 (331 aa).

The next 4 membrane-spanning stretches (helical) occupy residues 104–126 (PFGW…LLFW), 153–175 (YIGA…TYFI), 243–265 (TTMV…MPYL), and 278–300 (HIFV…ALAL).

Belongs to the sideroflexin family.

It is found in the mitochondrion inner membrane. It carries out the reaction citrate(in) = citrate(out). Its function is as follows. Mitochondrial amino-acid transporter. This Caenorhabditis elegans protein is Sideroflexin-5.